We begin with the raw amino-acid sequence, 394 residues long: uncharacterized protein (394 aa).

A run of 12 helical transmembrane segments spans residues 13–33 (LITT…TTMI), 35–55 (MAPT…VLPT), 73–95 (TTMT…TLTV), 110–130 (ALTV…HMVL), 152–172 (IHMV…PTVL), 179–198 (LMVL…TLTV), 216–236 (VLLA…TVLP), 241–261 (VLMV…HMVL), 267–287 (VLMV…PTVL), 293–313 (VLMV…TLTV), 340–360 (MMTL…VTTI), and 372–392 (ILLC…YVSA).

It localises to the membrane. This is an uncharacterized protein from Saccharomyces cerevisiae (strain ATCC 204508 / S288c) (Baker's yeast).